The primary structure comprises 177 residues: Shikimate kinase (177 aa).

Gly-17–Thr-22 lines the ATP pocket. Ser-21 contributes to the Mg(2+) binding site. Substrate contacts are provided by Asp-39, Arg-63, and Gly-85. ATP is bound at residue Arg-123. Residue Arg-142 participates in substrate binding. Arg-160 is a binding site for ATP.

This sequence belongs to the shikimate kinase family. In terms of assembly, monomer. Mg(2+) serves as cofactor.

It is found in the cytoplasm. It catalyses the reaction shikimate + ATP = 3-phosphoshikimate + ADP + H(+). It participates in metabolic intermediate biosynthesis; chorismate biosynthesis; chorismate from D-erythrose 4-phosphate and phosphoenolpyruvate: step 5/7. Functionally, catalyzes the specific phosphorylation of the 3-hydroxyl group of shikimic acid using ATP as a cosubstrate. In Halorhodospira halophila (strain DSM 244 / SL1) (Ectothiorhodospira halophila (strain DSM 244 / SL1)), this protein is Shikimate kinase.